We begin with the raw amino-acid sequence, 342 residues long: UDP-N-acetylenolpyruvoylglucosamine reductase (342 aa).

An FAD-binding PCMH-type domain is found at 17 to 192; sequence RFEAAARYAA…AEVTFALPVD (176 aa). The active site involves arginine 168. The active-site Proton donor is serine 242. Residue glutamate 338 is part of the active site.

The protein belongs to the MurB family. FAD serves as cofactor.

It localises to the cytoplasm. It catalyses the reaction UDP-N-acetyl-alpha-D-muramate + NADP(+) = UDP-N-acetyl-3-O-(1-carboxyvinyl)-alpha-D-glucosamine + NADPH + H(+). The protein operates within cell wall biogenesis; peptidoglycan biosynthesis. In terms of biological role, cell wall formation. This chain is UDP-N-acetylenolpyruvoylglucosamine reductase, found in Ralstonia nicotianae (strain ATCC BAA-1114 / GMI1000) (Ralstonia solanacearum).